The primary structure comprises 494 residues: Histidine--tRNA ligase (494 aa).

The segment at 1–20 (MAKDQKKQPRPKAETPKGFR) is disordered.

Belongs to the class-II aminoacyl-tRNA synthetase family. In terms of assembly, homodimer.

The protein localises to the cytoplasm. It carries out the reaction tRNA(His) + L-histidine + ATP = L-histidyl-tRNA(His) + AMP + diphosphate + H(+). The polypeptide is Histidine--tRNA ligase (Paracoccus denitrificans (strain Pd 1222)).